Here is a 99-residue protein sequence, read N- to C-terminus: Malonate decarboxylase acyl carrier protein (99 aa).

At S25 the chain carries O-(phosphoribosyl dephospho-coenzyme A)serine.

The protein belongs to the MdcC family. In terms of processing, covalently binds the prosthetic group of malonate decarboxylase.

It is found in the cytoplasm. Its function is as follows. Subunit of malonate decarboxylase, it is an acyl carrier protein to which acetyl and malonyl thioester residues are bound via a 2'-(5''-phosphoribosyl)-3'-dephospho-CoA prosthetic group and turn over during the catalytic mechanism. The protein is Malonate decarboxylase acyl carrier protein of Pseudomonas putida (Arthrobacter siderocapsulatus).